A 516-amino-acid polypeptide reads, in one-letter code: Replication factor C large subunit (516 aa).

Residue 44–51 (GAPGVGKT) participates in ATP binding. The interval 421–516 (RSEAVEAHAG…DGQAGLSEFM (96 aa)) is disordered. Residues 454–467 (VQSHKSAESGDDTV) show a composition bias toward basic and acidic residues. Residues 479-496 (QSGASETASATESASDSD) show a composition bias toward low complexity. Positions 497–508 (ASTDTDADDDDG) are enriched in acidic residues.

It belongs to the activator 1 small subunits family. RfcL subfamily. As to quaternary structure, heteromultimer composed of small subunits (RfcS) and large subunits (RfcL).

Its function is as follows. Part of the RFC clamp loader complex which loads the PCNA sliding clamp onto DNA. This Haloquadratum walsbyi (strain DSM 16790 / HBSQ001) protein is Replication factor C large subunit.